The primary structure comprises 234 residues: 2-amino-5-formylamino-6-ribosylaminopyrimidin-4(3H)-one 5'-monophosphate deformylase (234 aa).

Fe cation is bound by residues E29, H31, D40, and H109.

This sequence belongs to the creatininase superfamily. FAPy deformylase family. As to quaternary structure, homodimer. Fe(2+) is required as a cofactor. The cofactor is Zn(2+).

The catalysed reaction is 2-amino-5-formylamino-6-(5-phospho-D-ribosylamino)pyrimidin-4(3H)-one + H2O = 2,5-diamino-6-(1-D-ribosylamino)pyrimidin-4(3H)-one 5'-phosphate + formate + H(+). It participates in cofactor biosynthesis; coenzyme F420 biosynthesis. Its pathway is cofactor biosynthesis; riboflavin biosynthesis. Functionally, catalyzes the hydrolysis of the formamide of 2-amino-5-formylamino-6-ribosylamino-4(3H)-pyrimidinone 5'-monophosphate (FAPy) to form 2,5-diamino-6-ribosylamino-4(3H)-pyrimidinone 5'-phosphate (APy). The sequence is that of 2-amino-5-formylamino-6-ribosylaminopyrimidin-4(3H)-one 5'-monophosphate deformylase from Methanobrevibacter ruminantium (strain ATCC 35063 / DSM 1093 / JCM 13430 / OCM 146 / M1) (Methanobacterium ruminantium).